A 220-amino-acid polypeptide reads, in one-letter code: Nicotinamidase (220 aa).

Asp-11 is a catalytic residue. Zn(2+) contacts are provided by Asp-53, His-55, and His-94. Lys-119 is an active-site residue. Cys-163 acts as the Nucleophile in catalysis.

Belongs to the isochorismatase family.

The protein resides in the cytoplasm. It is found in the nucleus. Its subcellular location is the peroxisome. It catalyses the reaction nicotinamide + H2O = nicotinate + NH4(+). The protein operates within cofactor biosynthesis; nicotinate biosynthesis; nicotinate from nicotinamide: step 1/1. Functionally, catalyzes the deamidation of nicotinamide, an early step in the NAD(+) salvage pathway. The protein is Nicotinamidase (pnc1) of Schizosaccharomyces pombe (strain 972 / ATCC 24843) (Fission yeast).